The chain runs to 502 residues: MVNIRPDEISSIIRQQIDKYDQAIQVSNVGTVLQIGDGIARVYGLDQVMAGELLEFEDKTIGIALNLESDNVGVVLMGEGRGILEGSSVKATGKIAQVPVGKSYLGRVVNALGTPIDGKGDINCSETRLIESIAPGIISRKSVCEPIQTGITAIDSMIPIGRGQRELIIGDRQTGKSSVAIDTIINQKGEDVVCVYVAVGQKAATVASIVTTLEEKGALDYTCIVAANADDPATLQYIAPYTGAAIAEYFMYNGQATLVIYDDLSKQASAYREMSLLLRRPPGREAFPGDVFYLHSRLLERAAKLSDKLGGGSMTALPVIETQAGDVSAYIPTNVISITDGQIFLSGDLFNAGIRPAINVGISVSRVGSAAQIKAMKQVAGKLKLELAQFAELEAFSQFASDLDQATRNQLARGQRLREILKQPQNSPISVEEQVAIIYTGINGYLDDIAVDKVRRFVTNLRTNLKNSKPQYAEIIRNTKTFNSDAENLLKSAIADTKQSFV.

Residue 170 to 177 (GDRQTGKS) participates in ATP binding.

Belongs to the ATPase alpha/beta chains family. As to quaternary structure, F-type ATPases have 2 components, CF(1) - the catalytic core - and CF(0) - the membrane proton channel. CF(1) has five subunits: alpha(3), beta(3), gamma(1), delta(1), epsilon(1). CF(0) has four main subunits: a, b, b' and c.

Its subcellular location is the plastid. The protein resides in the chloroplast thylakoid membrane. It carries out the reaction ATP + H2O + 4 H(+)(in) = ADP + phosphate + 5 H(+)(out). Its function is as follows. Produces ATP from ADP in the presence of a proton gradient across the membrane. The alpha chain is a regulatory subunit. The sequence is that of ATP synthase subunit alpha, chloroplastic from Guillardia theta (Cryptophyte).